Consider the following 156-residue polypeptide: ATP synthase subunit b (156 aa).

The chain crosses the membrane as a helical span at residues 7 to 29 (LLGQAISFALFVWFCMKYVWPPL).

Belongs to the ATPase B chain family. As to quaternary structure, F-type ATPases have 2 components, F(1) - the catalytic core - and F(0) - the membrane proton channel. F(1) has five subunits: alpha(3), beta(3), gamma(1), delta(1), epsilon(1). F(0) has three main subunits: a(1), b(2) and c(10-14). The alpha and beta chains form an alternating ring which encloses part of the gamma chain. F(1) is attached to F(0) by a central stalk formed by the gamma and epsilon chains, while a peripheral stalk is formed by the delta and b chains.

It localises to the cell inner membrane. F(1)F(0) ATP synthase produces ATP from ADP in the presence of a proton or sodium gradient. F-type ATPases consist of two structural domains, F(1) containing the extramembraneous catalytic core and F(0) containing the membrane proton channel, linked together by a central stalk and a peripheral stalk. During catalysis, ATP synthesis in the catalytic domain of F(1) is coupled via a rotary mechanism of the central stalk subunits to proton translocation. In terms of biological role, component of the F(0) channel, it forms part of the peripheral stalk, linking F(1) to F(0). The sequence is that of ATP synthase subunit b from Vibrio alginolyticus.